A 203-amino-acid chain; its full sequence is Holliday junction branch migration complex subunit RuvA (203 aa).

Residues 1 to 64 (MIGRLRGIIL…EDAQLLYGFN (64 aa)) form a domain I region. The segment at 65 to 142 (NKQERTLFKE…KGLHGDLFTP (78 aa)) is domain II. Positions 143 to 154 (AADLVLTSPAGP) are flexible linker. The tract at residues 155-203 (TADDAEQEAVAALVALGYKPQEASRMVSKIARPDANSETLIREALRAAL) is domain III.

This sequence belongs to the RuvA family. In terms of assembly, homotetramer. Forms an RuvA(8)-RuvB(12)-Holliday junction (HJ) complex. HJ DNA is sandwiched between 2 RuvA tetramers; dsDNA enters through RuvA and exits via RuvB. An RuvB hexamer assembles on each DNA strand where it exits the tetramer. Each RuvB hexamer is contacted by two RuvA subunits (via domain III) on 2 adjacent RuvB subunits; this complex drives branch migration. In the full resolvosome a probable DNA-RuvA(4)-RuvB(12)-RuvC(2) complex forms which resolves the HJ.

Its subcellular location is the cytoplasm. In terms of biological role, the RuvA-RuvB-RuvC complex processes Holliday junction (HJ) DNA during genetic recombination and DNA repair, while the RuvA-RuvB complex plays an important role in the rescue of blocked DNA replication forks via replication fork reversal (RFR). RuvA specifically binds to HJ cruciform DNA, conferring on it an open structure. The RuvB hexamer acts as an ATP-dependent pump, pulling dsDNA into and through the RuvAB complex. HJ branch migration allows RuvC to scan DNA until it finds its consensus sequence, where it cleaves and resolves the cruciform DNA. In Klebsiella pneumoniae (strain 342), this protein is Holliday junction branch migration complex subunit RuvA.